We begin with the raw amino-acid sequence, 474 residues long: Catalase (474 aa).

Active-site residues include His-52 and Asn-124. Tyr-334 provides a ligand contact to heme.

This sequence belongs to the catalase family. The cofactor is heme.

The catalysed reaction is 2 H2O2 = O2 + 2 H2O. In terms of biological role, decomposes hydrogen peroxide into water and oxygen; serves to protect cells from the toxic effects of hydrogen peroxide. This chain is Catalase (katA), found in Campylobacter jejuni subsp. jejuni serotype O:2 (strain ATCC 700819 / NCTC 11168).